The sequence spans 487 residues: Proline--tRNA ligase (487 aa).

It belongs to the class-II aminoacyl-tRNA synthetase family. ProS type 3 subfamily. Homodimer.

It is found in the cytoplasm. It carries out the reaction tRNA(Pro) + L-proline + ATP = L-prolyl-tRNA(Pro) + AMP + diphosphate. Functionally, catalyzes the attachment of proline to tRNA(Pro) in a two-step reaction: proline is first activated by ATP to form Pro-AMP and then transferred to the acceptor end of tRNA(Pro). This Pyrobaculum calidifontis (strain DSM 21063 / JCM 11548 / VA1) protein is Proline--tRNA ligase.